Reading from the N-terminus, the 133-residue chain is Small ribosomal subunit protein eS24y (133 aa).

The disordered stretch occupies residues 104 to 133 (KSRKQIKERKNRAKKIRGVKKTKAGDTKKK). Residues 109–125 (IKERKNRAKKIRGVKKT) are compositionally biased toward basic residues.

This sequence belongs to the eukaryotic ribosomal protein eS24 family.

In Arabidopsis thaliana (Mouse-ear cress), this protein is Small ribosomal subunit protein eS24y (RPS24B).